The primary structure comprises 546 residues: CTP synthase (546 aa).

The tract at residues 1-266 (MTTNYIFVTG…DDLVCARFGI (266 aa)) is amidoligase domain. Serine 14 is a CTP binding site. Residue serine 14 participates in UTP binding. Residues 15 to 20 (SLGKGI) and aspartate 72 contribute to the ATP site. Mg(2+) contacts are provided by aspartate 72 and glutamate 140. CTP contacts are provided by residues 147-149 (DIE), 187-192 (KTKPTQ), and lysine 223. UTP is bound by residues 187-192 (KTKPTQ) and lysine 223. 239–241 (KDV) contributes to the ATP binding site. A Glutamine amidotransferase type-1 domain is found at 291 to 542 (TIGMVGKYIE…VKAAGQNARG (252 aa)). Position 352 (glycine 352) interacts with L-glutamine. Cysteine 379 acts as the Nucleophile; for glutamine hydrolysis in catalysis. L-glutamine is bound by residues 380–383 (LGMQ), glutamate 403, and arginine 470. Active-site residues include histidine 515 and glutamate 517.

Belongs to the CTP synthase family. As to quaternary structure, homotetramer.

It carries out the reaction UTP + L-glutamine + ATP + H2O = CTP + L-glutamate + ADP + phosphate + 2 H(+). It catalyses the reaction L-glutamine + H2O = L-glutamate + NH4(+). The catalysed reaction is UTP + NH4(+) + ATP = CTP + ADP + phosphate + 2 H(+). Its pathway is pyrimidine metabolism; CTP biosynthesis via de novo pathway; CTP from UDP: step 2/2. Allosterically activated by GTP, when glutamine is the substrate; GTP has no effect on the reaction when ammonia is the substrate. The allosteric effector GTP functions by stabilizing the protein conformation that binds the tetrahedral intermediate(s) formed during glutamine hydrolysis. Inhibited by the product CTP, via allosteric rather than competitive inhibition. Functionally, catalyzes the ATP-dependent amination of UTP to CTP with either L-glutamine or ammonia as the source of nitrogen. Regulates intracellular CTP levels through interactions with the four ribonucleotide triphosphates. The polypeptide is CTP synthase (Vibrio campbellii (strain ATCC BAA-1116)).